The primary structure comprises 2290 residues: Armadillo repeat-containing X-linked protein 4 (2290 aa).

Residues 7 to 24 (VGWVTAGLVIWAGTCYYI) form a helical membrane-spanning segment. Disordered stretches follow at residues 517–549 (QGEALPNTRGKARGKAKAKCKTGPGMDMKTCTQ), 564–583 (SRVDGRGNPNATSKAGTKAD), 967–988 (KVRGNSNAVPKAEAGADTVGSA), 1014–1087 (AVPK…ACRK), 1302–1430 (GSWA…ANSG), 1521–1715 (GSWG…RSED), 1911–1931 (SNTFRSKSGKDASFESGAGDN), and 1954–1973 (NENTSEDKSAPKAKAKKSSE). Positions 526–536 (GKARGKAKAKC) are enriched in basic residues. Polar residues predominate over residues 1073–1087 (TSESEGGSGTQACRK). Gly residues-rich tracts occupy residues 1328-1341 (SWAGAGGQASGGSM) and 1403-1414 (AGAGGQAGGGSK). Positions 1419-1430 (DQSSGRSWANSG) are enriched in polar residues. Over residues 1521 to 1535 (GSWGGASGQDVGGSR) the composition is skewed to gly residues. The span at 1537-1558 (GPTNQSSAGSWDSPGSQVSGSC) shows a compositional bias: polar residues. 2 stretches are compositionally biased toward gly residues: residues 1581–1598 (IGGGFWPGAGDQTGGGSR) and 1609–1623 (GSWGVAGGQVLGGAR). The segment covering 1628–1645 (DQSSGGSWAGTGNQSSGR) has biased composition (polar residues). Over residues 1674-1687 (GAGSQASGESWAGS) the composition is skewed to low complexity. 4 ARM repeats span residues 2031 to 2071 (RCKH…NSAD), 2073 to 2112 (SYSHEVVRNVGGISVIESLLNNPYPSVRQKALNALNNISV), 2153 to 2192 (ITSEYQHMVTNYISEFLRLLTVGSGETKDHVLGMLLNFSK), and 2194 to 2234 (PSMT…NINY).

It belongs to the eutherian X-chromosome-specific Armcx family.

It localises to the membrane. The polypeptide is Armadillo repeat-containing X-linked protein 4 (ARMCX4) (Homo sapiens (Human)).